Consider the following 475-residue polypeptide: Glutamate--tRNA ligase (475 aa).

A 'HIGH' region motif is present at residues 9 to 19 (PSPTGYLHVGG). Positions 240–244 (KLSKR) match the 'KMSKS' region motif. Lys243 contributes to the ATP binding site.

Belongs to the class-I aminoacyl-tRNA synthetase family. Glutamate--tRNA ligase type 1 subfamily. As to quaternary structure, monomer.

The protein localises to the cytoplasm. It carries out the reaction tRNA(Glu) + L-glutamate + ATP = L-glutamyl-tRNA(Glu) + AMP + diphosphate. Its function is as follows. Catalyzes the attachment of glutamate to tRNA(Glu) in a two-step reaction: glutamate is first activated by ATP to form Glu-AMP and then transferred to the acceptor end of tRNA(Glu). The sequence is that of Glutamate--tRNA ligase from Vibrio campbellii (strain ATCC BAA-1116).